A 275-amino-acid chain; its full sequence is Ribosomal RNA small subunit methyltransferase A (275 aa).

Residues Asn-19, Leu-21, Gly-46, Glu-71, Asp-94, and Asn-117 each coordinate S-adenosyl-L-methionine.

Belongs to the class I-like SAM-binding methyltransferase superfamily. rRNA adenine N(6)-methyltransferase family. RsmA subfamily.

It is found in the cytoplasm. The catalysed reaction is adenosine(1518)/adenosine(1519) in 16S rRNA + 4 S-adenosyl-L-methionine = N(6)-dimethyladenosine(1518)/N(6)-dimethyladenosine(1519) in 16S rRNA + 4 S-adenosyl-L-homocysteine + 4 H(+). Its function is as follows. Specifically dimethylates two adjacent adenosines (A1518 and A1519) in the loop of a conserved hairpin near the 3'-end of 16S rRNA in the 30S particle. May play a critical role in biogenesis of 30S subunits. The sequence is that of Ribosomal RNA small subunit methyltransferase A from Burkholderia thailandensis (strain ATCC 700388 / DSM 13276 / CCUG 48851 / CIP 106301 / E264).